The following is a 529-amino-acid chain: Bifunctional purine biosynthesis protein PurH (529 aa).

The region spanning 1 to 148 (MQQRRPIRRA…KNHKDVAIVV (148 aa)) is the MGS-like domain. Lys-287 is subject to N6-acetyllysine.

This sequence belongs to the PurH family.

The enzyme catalyses (6R)-10-formyltetrahydrofolate + 5-amino-1-(5-phospho-beta-D-ribosyl)imidazole-4-carboxamide = 5-formamido-1-(5-phospho-D-ribosyl)imidazole-4-carboxamide + (6S)-5,6,7,8-tetrahydrofolate. It catalyses the reaction IMP + H2O = 5-formamido-1-(5-phospho-D-ribosyl)imidazole-4-carboxamide. It functions in the pathway purine metabolism; IMP biosynthesis via de novo pathway; 5-formamido-1-(5-phospho-D-ribosyl)imidazole-4-carboxamide from 5-amino-1-(5-phospho-D-ribosyl)imidazole-4-carboxamide (10-formyl THF route): step 1/1. Its pathway is purine metabolism; IMP biosynthesis via de novo pathway; IMP from 5-formamido-1-(5-phospho-D-ribosyl)imidazole-4-carboxamide: step 1/1. In Escherichia coli O139:H28 (strain E24377A / ETEC), this protein is Bifunctional purine biosynthesis protein PurH.